A 157-amino-acid chain; its full sequence is S-ribosylhomocysteine lyase (157 aa).

Residues histidine 54, histidine 58, and cysteine 126 each coordinate Fe cation.

It belongs to the LuxS family. In terms of assembly, homodimer. Fe cation is required as a cofactor.

The catalysed reaction is S-(5-deoxy-D-ribos-5-yl)-L-homocysteine = (S)-4,5-dihydroxypentane-2,3-dione + L-homocysteine. In terms of biological role, involved in the synthesis of autoinducer 2 (AI-2) which is secreted by bacteria and is used to communicate both the cell density and the metabolic potential of the environment. The regulation of gene expression in response to changes in cell density is called quorum sensing. Catalyzes the transformation of S-ribosylhomocysteine (RHC) to homocysteine (HC) and 4,5-dihydroxy-2,3-pentadione (DPD). This Bacillus licheniformis (strain ATCC 14580 / DSM 13 / JCM 2505 / CCUG 7422 / NBRC 12200 / NCIMB 9375 / NCTC 10341 / NRRL NRS-1264 / Gibson 46) protein is S-ribosylhomocysteine lyase.